Reading from the N-terminus, the 1185-residue chain is Syntaxin-binding protein 5-like (1185 aa).

N-acetylmethionine is present on M1. The interval 15-44 (ASSPGSGSSSGSNSGGAGSGSVHPGGTAGL) is disordered. Positions 16–26 (SSPGSGSSSGS) are enriched in low complexity. WD repeat units lie at residues 73-106 (TALA…CYCQ), 113-152 (VLQL…SLKF), 157-193 (ITYC…GYVI), 212-246 (HLSD…ELRV), 252-284 (IHSI…PSRP), 306-348 (PILK…KAIT), 356-390 (IVEF…VVDL), 412-489 (TCTA…YKLK), 517-628 (QMIY…DLVI), and 642-704 (TSLS…IADN). At T567 the chain carries Phosphothreonine. The segment at 567-601 (TPEPETSPPFPDLSSQLPPSRSLSGSTNTVSSEGV) is disordered. Residues S573, S588, and S592 each carry the phosphoserine modification. Low complexity predominate over residues 578–592 (DLSSQLPPSRSLSGS). Residue T595 is modified to Phosphothreonine. Position 598 is a phosphoserine (S598). Residue R708 is modified to Omega-N-methylarginine. The span at 747 to 768 (TSDHVNGHCTSPTSQSCSSGKR) shows a compositional bias: polar residues. The interval 747–770 (TSDHVNGHCTSPTSQSCSSGKRLS) is disordered. Phosphoserine occurs at positions 762, 764, 765, 770, 771, 792, 799, 811, 819, 821, and 822. 4 WD repeats span residues 831–888 (ITAL…SGTF), 897–968 (TFSC…QTCL), 973–1017 (ITET…LDVN), and 1031–1054 (CFTN…TYSQ). Position 1092 is a phosphothreonine (T1092). One can recognise a v-SNARE coiled-coil homology domain in the interval 1120-1180 (SIEGMKGAAG…HELMLKYKDK (61 aa)).

This sequence belongs to the WD repeat L(2)GL family. Interacts with STX1A and STX4. Post-translationally, phosphorylated, leading to STXBP5L increased turnover and subsequent de-repression of insulin secretion. Phosphorylated on serine residues in response to glucose or phorbol esters. Ubiquitinated by the E3 ligase SYVN1, leading to STXBP5L proteasomal degradation. As to expression, detected in hippocampus and cerebellum. Expressed in pancreatic beta-cells where it modulates insulin secretion.

It is found in the cytoplasm. Its subcellular location is the cell membrane. It localises to the membrane. Functionally, plays a role in vesicle trafficking and exocytosis inhibition. In pancreatic beta-cells, inhibits insulin secretion probably by interacting with and regulating STX1A and STX4, key t-SNARE proteins involved in the fusion of insulin granules to the plasma membrane. Also plays a role in neurotransmitter release by inhibiting basal acetylcholine release from axon terminals and by preventing synaptic fatigue upon repetitive stimulation. Promotes as well axonal outgrowth. In Mus musculus (Mouse), this protein is Syntaxin-binding protein 5-like (Stxbp5l).